Reading from the N-terminus, the 468-residue chain is UDP-N-acetylmuramate--L-alanine ligase (468 aa).

Residue 114–120 (GTHGKTT) coordinates ATP.

It belongs to the MurCDEF family.

It localises to the cytoplasm. The enzyme catalyses UDP-N-acetyl-alpha-D-muramate + L-alanine + ATP = UDP-N-acetyl-alpha-D-muramoyl-L-alanine + ADP + phosphate + H(+). The protein operates within cell wall biogenesis; peptidoglycan biosynthesis. In terms of biological role, cell wall formation. This Methylobacterium radiotolerans (strain ATCC 27329 / DSM 1819 / JCM 2831 / NBRC 15690 / NCIMB 10815 / 0-1) protein is UDP-N-acetylmuramate--L-alanine ligase.